The primary structure comprises 344 residues: Photosystem II protein D1 (344 aa).

T2 is subject to N-acetylthreonine. T2 carries the post-translational modification Phosphothreonine. 3 consecutive transmembrane segments (helical) span residues 29-46 (YIGWFGCLMIPTLLTATS), 118-133 (HFFLGICAYMGREWEL), and 142-156 (WIAVAYSAPVAAATA). H118 contacts chlorophyll a. A pheophytin a-binding site is contributed by Y126. [CaMn4O5] cluster-binding residues include D170 and E189. The chain crosses the membrane as a helical span at residues 197 to 218 (FHMLGVAGVFGGSLFSAMHGSL). Residue H198 coordinates chlorophyll a. A quinone-binding positions include H215 and 264-265 (SF). H215 contributes to the Fe cation binding site. H272 lines the Fe cation pocket. Residues 274–288 (FLAAWPVIGIWFTAL) traverse the membrane as a helical segment. The [CaMn4O5] cluster site is built by H332, E333, D342, and A344.

This sequence belongs to the reaction center PufL/M/PsbA/D family. As to quaternary structure, PSII is composed of 1 copy each of membrane proteins PsbA, PsbB, PsbC, PsbD, PsbE, PsbF, PsbH, PsbI, PsbJ, PsbK, PsbL, PsbM, PsbT, PsbX, PsbY, PsbZ, Psb30/Ycf12, at least 3 peripheral proteins of the oxygen-evolving complex and a large number of cofactors. It forms dimeric complexes. It depends on The D1/D2 heterodimer binds P680, chlorophylls that are the primary electron donor of PSII, and subsequent electron acceptors. It shares a non-heme iron and each subunit binds pheophytin, quinone, additional chlorophylls, carotenoids and lipids. D1 provides most of the ligands for the Mn4-Ca-O5 cluster of the oxygen-evolving complex (OEC). There is also a Cl(-1) ion associated with D1 and D2, which is required for oxygen evolution. The PSII complex binds additional chlorophylls, carotenoids and specific lipids. as a cofactor. Tyr-161 forms a radical intermediate that is referred to as redox-active TyrZ, YZ or Y-Z.

The protein localises to the plastid. Its subcellular location is the chloroplast thylakoid membrane. It carries out the reaction 2 a plastoquinone + 4 hnu + 2 H2O = 2 a plastoquinol + O2. Photosystem II (PSII) is a light-driven water:plastoquinone oxidoreductase that uses light energy to abstract electrons from H(2)O, generating O(2) and a proton gradient subsequently used for ATP formation. It consists of a core antenna complex that captures photons, and an electron transfer chain that converts photonic excitation into a charge separation. The D1/D2 (PsbA/PsbD) reaction center heterodimer binds P680, the primary electron donor of PSII as well as several subsequent electron acceptors. This chain is Photosystem II protein D1, found in Pleurastrum terricola (Filamentous green alga).